A 438-amino-acid chain; its full sequence is Argininosuccinate lyase (438 aa).

It belongs to the lyase 1 family. Argininosuccinate lyase subfamily.

The protein localises to the cytoplasm. It carries out the reaction 2-(N(omega)-L-arginino)succinate = fumarate + L-arginine. It functions in the pathway amino-acid biosynthesis; L-arginine biosynthesis; L-arginine from L-ornithine and carbamoyl phosphate: step 3/3. The polypeptide is Argininosuccinate lyase (Clostridium kluyveri (strain NBRC 12016)).